We begin with the raw amino-acid sequence, 479 residues long: FAD-dependent monooxygenase cdmI (479 aa).

FAD-binding residues include glutamate 43, glycine 57, and arginine 116. Residues asparagine 156 and asparagine 198 are each glycosylated (N-linked (GlcNAc...) asparagine). 2 residues coordinate FAD: aspartate 315 and alanine 328. A helical membrane pass occupies residues 453 to 473; it reads PFILAVLAGLGFLLTMFKQQW.

It belongs to the paxM FAD-dependent monooxygenase family. FAD serves as cofactor.

Its subcellular location is the membrane. The catalysed reaction is verruculide C + AH2 + O2 = verruculide C epoxide + A + H2O. It functions in the pathway secondary metabolite biosynthesis; terpenoid biosynthesis. Functionally, FAD-dependent monooxygenase; part of the gene cluster that mediates the biosynthesis of chrodrimanin B, a meroterpenoid that acts as a potent blocker of insect GABA-gated chloride channels. The first step of the pathway is the biosynthesis of 6-hydroxymellein by the polyketide synthase cdmE. The prenyltransferase cdmH acts as a 6-hydroxymellein 5-farnesyltransferase and produces the hydrophobic metabolite verruculide C. The FAD-dependent monooxygenase cdmI further converts verruculide C into verruculide B. The terpene cyclase cdmG then produced the pentacyclic molecule 3-hydroxypentacecilide A, the backbone structure of chrodrimanin B, via folding the farnesyl moiety of the substrate into the chair-boat conformation. The short-chain dehydrogenase/reductase cdmF functions as the 3-OH dehydrogenase that oxidizes the C-3 hydroxyl group of 3-hydroxypentacecilide A and produces chrodrimanin C, the dehydrogenated product of 3-hydroxypentacecilide A. The cytochrome P450 monooxygenase cdmJ then accepts both 3-hydroxypentacecilide A and chrodrimanin C and functions as a C-7-beta-hydroxylase to produce respectively chrodrimanin H and chrodrimanin F. The dioxygenase cdmA accepts chrodrimanin H to afford chrodrimanin E, which is further transformed to chrodrimanin A by the dioxygenase cdmD. CdmA can also accept chrodrimanin C as substrate to convert it into verruculide A, which is further converted into chrodrimanin T by cdmD. The last step of the biosynthesis is proposed to be performed by the acetyltransferase cdmC which acetylates chrodrimanin A to yield chrodrimanin B. The pathway may also lead to the production of additional shunt products, including chrodrimanins T and U. In Talaromyces verruculosus (Penicillium verruculosum), this protein is FAD-dependent monooxygenase cdmI.